The primary structure comprises 317 residues: Melanocyte-stimulating hormone receptor (317 aa).

At 1–37 (MPMQGAQRRLLGSLNSTPTATPNLGLAANHTGAPCLE) the chain is on the extracellular side. A glycan (N-linked (GlcNAc...) asparagine) is linked at Asn-29. The chain crosses the membrane as a helical span at residues 38-63 (VSIPDGLFLSLGLVSLVENVLVVAAI). The Cytoplasmic portion of the chain corresponds to 64–72 (AKNRNLHSP). A helical transmembrane segment spans residues 73-93 (MYCFICCLALSDLLVSGSNML). Over 94–118 (ETAVILLLEAGALATRASVVQQLQN) the chain is Extracellular. Residues 119–140 (TIDVLTCSSMLCSLCFLGAIAV) traverse the membrane as a helical segment. Over 141–163 (DRYVSIFYALRYHSIVTLPRARR) the chain is Cytoplasmic. A helical membrane pass occupies residues 164–183 (AIAAIWVASVLSSTLFIAYC). Topologically, residues 184-191 (DHAAVLLC) are extracellular. The chain crosses the membrane as a helical span at residues 192–211 (LVVFFLAMLVLMAVLYVHML). The Cytoplasmic portion of the chain corresponds to 212-240 (ARACQHAQGITRLHKRQLPAHQGFGLRGA). A helical membrane pass occupies residues 241–266 (ATLTILLGIFFLCWGPFFLHLMLVVL). Topologically, residues 267–279 (CPQHLTCSCIFKN) are extracellular. The helical transmembrane segment at 280-300 (FKVFLTLIICNTIIDPLIYAF) threads the bilayer. Topologically, residues 301 to 317 (RSQELCRTLKEVLLCSW) are cytoplasmic. Cys-315 carries the S-palmitoyl cysteine lipid modification.

The protein belongs to the G-protein coupled receptor 1 family. Interacts with MGRN1, but does not undergo MGRN1-mediated ubiquitination; this interaction competes with GNAS-binding and thus inhibits agonist-induced cAMP production. Interacts with OPN3; the interaction results in a decrease in MC1R-mediated cAMP signaling and ultimately a decrease in melanin production in melanocytes.

The protein localises to the cell membrane. Its function is as follows. Receptor for MSH (alpha, beta and gamma) and ACTH. The activity of this receptor is mediated by G proteins which activate adenylate cyclase. Mediates melanogenesis, the production of eumelanin (black/brown) and phaeomelanin (red/yellow), via regulation of cAMP signaling in melanocytes. In Alouatta palliata (Mantled howler monkey), this protein is Melanocyte-stimulating hormone receptor (MC1R).